We begin with the raw amino-acid sequence, 822 residues long: Probable phosphoketolase (822 aa).

The protein belongs to the XFP family. Thiamine diphosphate serves as cofactor.

The chain is Probable phosphoketolase from Nocardia farcinica (strain IFM 10152).